Consider the following 66-residue polypeptide: uncharacterized protein (66 aa).

This is an uncharacterized protein from Vertebrata (FPV).